The sequence spans 140 residues: RxLR effector protein CRE2 (140 aa).

The first 24 residues, 1–24, serve as a signal peptide directing secretion; sequence MRWLIWTAVSTLVMLLAMTEVSAS. The RxLR-dEER signature appears at 56–72; it reads RSLRDKSSSLITESEER.

Belongs to the RxLR effector family.

It localises to the secreted. It is found in the host cell. Effector that is involved in host plant infection. Contributes to virulence during the early infection stage, by inhibiting plant defense responses induced by both PAMP-triggered immunity (PTI) and effector-triggered immunity (ETI). This is RxLR effector protein CRE2 from Phytophthora infestans (strain T30-4) (Potato late blight agent).